A 344-amino-acid chain; its full sequence is Ferrochelatase (344 aa).

Residues H191 and E271 each coordinate Fe cation.

This sequence belongs to the ferrochelatase family.

The protein resides in the cytoplasm. It catalyses the reaction heme b + 2 H(+) = protoporphyrin IX + Fe(2+). It functions in the pathway porphyrin-containing compound metabolism; protoheme biosynthesis; protoheme from protoporphyrin-IX: step 1/1. Its function is as follows. Catalyzes the ferrous insertion into protoporphyrin IX. The protein is Ferrochelatase of Pelagibacter ubique (strain HTCC1062).